Consider the following 625-residue polypeptide: Mitochondrial Rho GTPase 1 (625 aa).

At 1-601 the chain is on the cytoplasmic side; that stretch reads MSDDETLADV…LRRVFYLNDS (601 aa). Residues 3–170 enclose the Miro 1 domain; sequence DDETLADVRI…EIFYYAQKAV (168 aa). Residues 16–23, 62–66, and 123–126 each bind GTP; these read GDEGCGKT, DLSIK, and NKSD. EF-hand domains are found at residues 188–223 and 308–343; these read RARKALIRVFKICDRDNDGYLSDTELNDFQKLCFGI and EGVQFVSALFEKYDEDKDGCLSPSELQNLFSVCPVP. Ca(2+) contacts are provided by Asp201, Asp203, Asp205, Tyr207, Glu212, Asp321, Asp323, Asp325, Cys327, and Glu332. The 206-residue stretch at 420–625 folds into the Miro 2 domain; it reads HGTDRKVFQC…LAGFLVLKNL (206 aa). GTP contacts are provided by residues 433-440, 470-474, and 537-540; these read GAKDAGKT, RVKEE, and TKVE. The helical; Anchor for type IV membrane protein transmembrane segment at 602–622 threads the bilayer; the sequence is NLLSKITFGAAIVALAGFLVL. Residues 623–625 lie on the Mitochondrial intermembrane side of the membrane; the sequence is KNL.

It belongs to the mitochondrial Rho GTPase family.

Its subcellular location is the mitochondrion outer membrane. Functionally, mitochondrial GTPase involved in mitochondrial trafficking. Probably involved in control of anterograde transport of mitochondria and their subcellular distribution. Plays a role in maintaining mitochondrial morphology. In Caenorhabditis elegans, this protein is Mitochondrial Rho GTPase 1.